The following is a 513-amino-acid chain: Plexin domain-containing protein 2 (513 aa).

A signal peptide spans 1–24; it reads MGARSESLVGVVLLFQLLADRLWC. The Extracellular segment spans residues 25–438; that stretch reads AATASDSLYD…AEMKTGTLHT (414 aa). N-linked (GlcNAc...) asparagine glycosylation is found at N88, N145, N198, N206, N222, and N330. The region spanning 312 to 357 is the PSI domain; it reads TCLQFNSCSSCVSSMIGFNCSWCNIPQRCSSGFDRHRQDWVENGCT. The chain crosses the membrane as a helical span at residues 439-459; it reads GLIIGILILVLLIITAILVAV. The Cytoplasmic segment spans residues 460–513; sequence YMYHHPTSSASLFLIERRPSRWPAMKFRRGSGHPAYAEVEPIGEKEGFIVSEQC.

It belongs to the plexin family.

It is found in the membrane. This is Plexin domain-containing protein 2 (plxdc2) from Xenopus laevis (African clawed frog).